Consider the following 857-residue polypeptide: MAFPAPAFSLANLLNGSYGVDTPEDVERLRSEQREEAAAACRNYRPLPAVDVSESVTEDAHSLRTPDGAPAEAVSDEFVTYGAEDYLEKSDDELLVAFETMVKPMRIGQLWCPAFNKCSFISSIAMARALLLAPRTSHRTMKCFEDLVAAIYTKSDFYYSEECEADDAQIDISSRDVPGYSFEPWSRTSGFEPPPICEACDMIMYQCPCFDFNALKKSCAERTFADDYVIEGLDGVVDNATLLSNLGPFLVPVKCQYEKCPTPTIAIPPDLNRATDRVDINLVQSICDSTLPTHSNYDDSFHQVFVESADYSIDLDHVRLRQSDLIAKIPDSGHMIPVLNTGSGHKRVGTTKEVLTAIKKRNADVPELGDSVNLSRLSKAVAERFFISYINGNSLASSNFVNVVSNFHDYMEKWKSSGLSYDDLPDLHAENLQFYDHMIKSDVKPVVSDTLNIDRPVPATITYHKKSITSQFSPLFTALFERFQRCLRERIILPVGKISSLEMAGFDVKNKHCLEIDLSKFDKSQGEFHLLIQEHILNGLGCPAPITKWWCDFHRFSYIRDRRAGVGMPISFQRRTGDAFTYFGNTIVTMAEFAWCYDTDQFEKLLFSGDDSLGFSLLPPVGDPSKFTTLFNMEAKVMEPAVPYICSKFLLSDEFGNTFSVPDPLREVQRLGTKKIPYSDNDEFLFAHFMSFVDRLKFLDRMSQSCIDQLSIFFELKYKKSGEEAALMLGAFKKYTANFQSYKELYYSDRRQCELINSFCSTEFRVERVNSNKQRKKYGIERRCNDKRRTPTGSYGGGEEAETKVSQTESTGTRSQKSQRESAFKSQTVPLPTVLSSRWFGTDRVMPPCERGGVTRA.

One can recognise a RdRp catalytic domain in the interval 511–624; it reads KHCLEIDLSK…FSLLPPVGDP (114 aa). Positions 780–789 are enriched in basic and acidic residues; sequence IERRCNDKRR. Positions 780-829 are disordered; sequence IERRCNDKRRTPTGSYGGGEEAETKVSQTESTGTRSQKSQRESAFKSQTV. Over residues 804–816 the composition is skewed to polar residues; the sequence is KVSQTESTGTRSQ.

It belongs to the ssRNA positive-strand viruses RNA-directed RNA polymerase family. As to quaternary structure, interacts with replication protein 1a.

The catalysed reaction is RNA(n) + a ribonucleoside 5'-triphosphate = RNA(n+1) + diphosphate. Functionally, RNA-dependent RNA polymerase which replicates the viral genome composed of 3 RNA segments, RNA1, RNA2 and RNA3. The protein is RNA-directed RNA polymerase 2a of Cucumis sativus (Cucumber).